Consider the following 710-residue polypeptide: MSALSVIEQRLLKWDKLASLVPKSKKTPFPIDRLNELLKVCANSSYLRIGESIHAHLIVTNQSSRAEDAYQINSLINLYVKCRETVRARKLFDLMPERNVVSWCAMMKGYQNSGFDFEVLKLFKSMFFSGESRPNEFVATVVFKSCSNSGRIEEGKQFHGCFLKYGLISHEFVRNTLVYMYSLCSGNGEAIRVLDDLPYCDLSVFSSALSGYLECGAFKEGLDVLRKTANEDFVWNNLTYLSSLRLFSNLRDLNLALQVHSRMVRFGFNAEVEACGALINMYGKCGKVLYAQRVFDDTHAQNIFLNTTIMDAYFQDKSFEEALNLFSKMDTKEVPPNEYTFAILLNSIAELSLLKQGDLLHGLVLKSGYRNHVMVGNALVNMYAKSGSIEDARKAFSGMTFRDIVTWNTMISGCSHHGLGREALEAFDRMIFTGEIPNRITFIGVLQACSHIGFVEQGLHYFNQLMKKFDVQPDIQHYTCIVGLLSKAGMFKDAEDFMRTAPIEWDVVAWRTLLNACYVRRNYRLGKKVAEYAIEKYPNDSGVYVLLSNIHAKSREWEGVAKVRSLMNNRGVKKEPGVSWIGIRNQTHVFLAEDNQHPEITLIYAKVKEVMSKIKPLGYSPDVAGAFHDVDEEQREDNLSYHSEKLAVAYGLIKTPEKSPLYVTKNVRICDDCHSAIKLISKISKRYIVIRDSNRFHHFLDGQCSCCDYW.

S2 is subject to N-acetylserine. PPR repeat units lie at residues 35–64 (NELL…NQSS), 68–98 (DAYQ…MPER), 99–133 (NVVS…GESR), 135–169 (NEFV…GLIS), 170–200 (HEFV…LPYC), 201–235 (DLSV…DFVW), 236–270 (NNLT…GFNA), 271–301 (EVEA…THAQ), 302–336 (NIFL…EVPP), 337–371 (NEYT…GYRN), 372–402 (HVMV…MTFR), 403–437 (DIVT…GEIP), 438–473 (NRIT…DVQP), and 474–504 (DIQH…APIE). Residues 509–584 (AWRTLLNACY…EPGVSWIGIR (76 aa)) are type E motif. Residues 585–615 (NQTHVFLAEDNQHPEITLIYAKVKEVMSKIK) form a type E(+) motif region. Residues 616–710 (PLGYSPDVAG…DGQCSCCDYW (95 aa)) are type DYW motif.

This sequence belongs to the PPR family. PCMP-H subfamily.

This Arabidopsis thaliana (Mouse-ear cress) protein is Pentatricopeptide repeat-containing protein At5g39680 (EMB2744).